The primary structure comprises 484 residues: Probable receptor-like protein kinase At5g18500 (484 aa).

A helical transmembrane segment spans residues 21–41 (IIVIVLSAIFVVVLAISLWLT). Residues 72–135 (RVDEVSSSNG…SVSSANPLTA (64 aa)) are disordered. Residues 91–105 (KFGDKEPEKGIKAES) show a composition bias toward basic and acidic residues. Over residues 125–134 (SSVSSANPLT) the composition is skewed to polar residues. Position 155 is a phosphothreonine (Thr155). Residues 166–445 (FSRDNIIGDG…MLESEEYPIA (280 aa)) form the Protein kinase domain. ATP contacts are provided by residues 172 to 180 (IGDGGYGVV) and Lys194. Tyr239 carries the phosphotyrosine modification. Catalysis depends on Asp292, which acts as the Proton acceptor. Residue Ser296 is modified to Phosphoserine. A phosphothreonine mark is found at Thr326 and Thr331. At Tyr339 the chain carries Phosphotyrosine. The tract at residues 425-484 (EKRPRMSQVARMLESEEYPIAREDRRRRRSQNGTTRDSDPPRNSTDTDKSEYHDLKPEGG) is disordered. The span at 460–484 (RDSDPPRNSTDTDKSEYHDLKPEGG) shows a compositional bias: basic and acidic residues.

The protein belongs to the protein kinase superfamily. Ser/Thr protein kinase family.

It localises to the cell membrane. It catalyses the reaction L-seryl-[protein] + ATP = O-phospho-L-seryl-[protein] + ADP + H(+). It carries out the reaction L-threonyl-[protein] + ATP = O-phospho-L-threonyl-[protein] + ADP + H(+). This Arabidopsis thaliana (Mouse-ear cress) protein is Probable receptor-like protein kinase At5g18500.